The primary structure comprises 678 residues: MGLLALGTPLQWFESRTYNEHIRDEGIEQLLYIFQAAGKRDNDPLFWGDELEYMVVDFDDKERNSMLDVCHDKILTELNMEDSSLCEANDVSFHPEYGRYMLEATPASPYLNYVGSYVEVNMQKRRAIAEYKLSEYARQDSKNNLHVGSRSVPLTLTVFPRMGCPDFINIKDPWNHKNAASRSLFLPDEVINRHVRFPNLTASIRTRRGEKVCMNVPMYKDIATPETDDSIYDRDWFLPEDKEAKLASKPGFIYMDSMGFGMGCSCLQVTFQAPNINKARYLYDALVNFAPIMLAFSAAAPAFKGWLADQDVRWNVISGAVDDRTPKERGVAPLLPKYNKNGFGGIAKDVQDKVLEIPKSRYSSVDLFLGGSKFFNRTYNDTNVPINEKVLGRLLENDKAPLDYDLAKHFAHLYIRDPVSTFEELLNQDNKTSSNHFENIQSTNWQTLRFKPPTQQATPDKKDSPGWRVEFRPFEVQLLDFENAAYSVLIYLIVDSILTFSDNINAYIHMSKVWENMKIAHHRDAILFEKFHWKKSFRNDTDVETEDYSISEIFHNPENGIFPQFVTPILCQKGFVTKDWKELKHSSKHERLYYYLKLISDRASGELPTTAKFFRNFVLQHPDYKHDSKISKSINYDLLSTCDRLTHLDDSKGELTSFLGAEIAEYVKKNKPSIESKC.

The protein belongs to the glutamate--cysteine ligase type 3 family.

It catalyses the reaction L-cysteine + L-glutamate + ATP = gamma-L-glutamyl-L-cysteine + ADP + phosphate + H(+). It participates in sulfur metabolism; glutathione biosynthesis; glutathione from L-cysteine and L-glutamate: step 1/2. Feedback inhibition by glutathione. Catalyzes the ATP-dependent condensation of cysteine and glutamate to form the dipeptide gamma-glutamylcysteine (gamma-GC), the first and rate-limiting step in the production of glutathione (GSH). The polypeptide is Glutamate--cysteine ligase (GSH1) (Saccharomyces cerevisiae (strain ATCC 204508 / S288c) (Baker's yeast)).